The primary structure comprises 132 residues: Small ribosomal subunit protein uS8 (132 aa).

This sequence belongs to the universal ribosomal protein uS8 family. In terms of assembly, part of the 30S ribosomal subunit. Contacts proteins S5 and S12.

Functionally, one of the primary rRNA binding proteins, it binds directly to 16S rRNA central domain where it helps coordinate assembly of the platform of the 30S subunit. This Francisella tularensis subsp. novicida (strain U112) protein is Small ribosomal subunit protein uS8.